We begin with the raw amino-acid sequence, 146 residues long: Transcriptional regulator MraZ (146 aa).

2 consecutive SpoVT-AbrB domains span residues 5 to 47 and 76 to 119; these read EYYH…TITD and SVQV…AKER.

Belongs to the MraZ family. As to quaternary structure, forms oligomers.

It is found in the cytoplasm. The protein localises to the nucleoid. In Dictyoglomus turgidum (strain DSM 6724 / Z-1310), this protein is Transcriptional regulator MraZ.